Reading from the N-terminus, the 328-residue chain is Interferon regulatory factor 1 (328 aa).

The segment at residues 5 to 113 (RMRMRPWLEM…SAVRVYRMLP (109 aa)) is a DNA-binding region (IRF tryptophan pentad repeat). N6-acetyllysine is present on lysine 78. The disordered stretch occupies residues 92 to 164 (EEVKDQSRNK…STLPDDHSSY (73 aa)). Low complexity predominate over residues 141 to 157 (GDSSPDTLSDGLSSSTL). Residues lysine 276 and lysine 300 each participate in a glycyl lysine isopeptide (Lys-Gly) (interchain with G-Cter in SUMO) cross-link.

It belongs to the IRF family. As to quaternary structure, monomer. Homodimer. Interacts with EP300. Interacts with MYD88. Interacts with PIAS3. Interacts with SPOP. Post-translationally, phosphorylated by CK2 and this positively regulates its activity. Sumoylation represses the transcriptional activity and displays enhanced resistance to protein degradation. Sumoylated by UBE2I/UBC9 and SUMO1. Inactivates the tumor suppressor activity. Elevated levels in tumor cells. Major site is Lys-276. Sumoylation is enhanced by PIAS3. Desumoylated by SENP1 in tumor cells and appears to compete with ubiquitination on C-terminal sites. In terms of processing, ubiquitinated in a SPOP-depedent manner. Appears to compete with sumoylation on C-terminal sites.

Its subcellular location is the nucleus. The protein resides in the cytoplasm. With respect to regulation, activated by MYD88. Functionally, transcriptional regulator which displays a remarkable functional diversity in the regulation of cellular responses. Regulates transcription of IFN and IFN-inducible genes, host response to viral and bacterial infections, regulation of many genes expressed during hematopoiesis, inflammation, immune responses and cell proliferation and differentiation, regulation of the cell cycle and induction of growth arrest and programmed cell death following DNA damage. Stimulates both innate and acquired immune responses through the activation of specific target genes and can act as a transcriptional activator and repressor regulating target genes by binding to an interferon-stimulated response element (ISRE) in their promoters. Has an essentail role in IFNG-dependent immunity to mycobacteria. Binds to a consensus sequence in gene promoters. Its target genes for transcriptional activation activity include: genes involved in anti-viral response, such as IFN-alpha/beta, RIGI, TNFSF10/TRAIL, ZBP1, OAS1/2, PIAS1/GBP, EIF2AK2/PKR and RSAD2/viperin; antibacterial response, such as GBP2, GBP5 and NOS2/INOS; anti-proliferative response, such as p53/TP53, LOX and CDKN1A; apoptosis, such as BBC3/PUMA, CASP1, CASP7 and CASP8; immune response, such as IL7, IL12A/B and IL15, PTGS2/COX2 and CYBB; DNA damage responses and DNA repair, such as POLQ/POLH; MHC class I expression, such as TAP1, PSMB9/LMP2, PSME1/PA28A, PSME2/PA28B and B2M and MHC class II expression, such as CIITA; metabolic enzymes, such as ACOD1/IRG1. Represses genes involved in anti-proliferative response, such as BIRC5/survivin, CCNB1, CCNE1, CDK1, CDK2 and CDK4 and in immune response, such as FOXP3, IL4, ANXA2 and TLR4. Stimulates p53/TP53-dependent transcription through enhanced recruitment of EP300 leading to increased acetylation of p53/TP53. Plays an important role in immune response directly affecting NK maturation and activity, macrophage production of IL12, Th1 development and maturation of CD8+ T-cells. Also implicated in the differentiation and maturation of dendritic cells and in the suppression of regulatory T (Treg) cells development. Acts as a tumor suppressor and plays a role not only in antagonism of tumor cell growth but also in stimulating an immune response against tumor cells. This is Interferon regulatory factor 1 (Irf1) from Rattus norvegicus (Rat).